Here is a 492-residue protein sequence, read N- to C-terminus: Tyrosine--tRNA ligase, mitochondrial (492 aa).

Tyrosine 89 is a binding site for L-tyrosine. Aspartate 93 is a binding site for ATP. The 'HIGH' region motif lies at 94–103 (PTAQSLHLGN). The L-tyrosine site is built by aspartate 133, tyrosine 239, glutamine 243, aspartate 246, and glutamine 265. The 'KMSKS' region motif lies at 303–307 (KFGKS). ATP is bound at residue lysine 306.

This sequence belongs to the class-I aminoacyl-tRNA synthetase family. In terms of assembly, homodimer.

Its subcellular location is the mitochondrion matrix. It catalyses the reaction tRNA(Tyr) + L-tyrosine + ATP = L-tyrosyl-tRNA(Tyr) + AMP + diphosphate + H(+). In terms of biological role, catalyzes the attachment of tyrosine to tRNA(Tyr) in a two-step reaction: tyrosine is first activated by ATP to form Tyr-AMP and then transferred to the acceptor end of tRNA(Tyr). This is Tyrosine--tRNA ligase, mitochondrial (MSY1) from Saccharomyces cerevisiae (strain ATCC 204508 / S288c) (Baker's yeast).